Here is a 312-residue protein sequence, read N- to C-terminus: MNWTELSIIINHEAVELATNILENHGSNGVVIEDSDGLINQPEDKYGEIYALKKEDYPDKGVRLKAYFNEMTYDDKLRQQIKDELLNLDELDQHNVQFSEQIIAETDWENEWKNYFHPFRASKKFTIVPSWETYAKEADEELCIELDPGMAFGTGDHPTTSMCLKAIETYVLPQHSVIDVGTGSGILSIASHLIGVKRIKALDIDEMAVSVAKENFRRNHCETLIEAVPGNLLKDETEKFDIVIANILAHIIDEMIEDAYNTLNEGGYFITSGIIKEKYEGIQSHMERVGFKIISEQHDNGWVCLVGQKVSE.

S-adenosyl-L-methionine contacts are provided by Thr160, Gly181, Asp203, and Asn246.

The protein belongs to the methyltransferase superfamily. PrmA family.

The protein localises to the cytoplasm. It catalyses the reaction L-lysyl-[protein] + 3 S-adenosyl-L-methionine = N(6),N(6),N(6)-trimethyl-L-lysyl-[protein] + 3 S-adenosyl-L-homocysteine + 3 H(+). Functionally, methylates ribosomal protein L11. This is Ribosomal protein L11 methyltransferase from Staphylococcus aureus (strain COL).